A 127-amino-acid chain; its full sequence is MRHQKSGRKFNRTSAHREAMFRNMAASLFKHELIKTTLPKAKELRRVAEPLITIGKVDGVANRRLAFARLRDKEAVGKLFVELGSRYATRPGGYLRILKAGFRAGDNAPMAYVELVDRPVVAEEVAE.

The protein belongs to the bacterial ribosomal protein bL17 family. As to quaternary structure, part of the 50S ribosomal subunit. Contacts protein L32.

This chain is Large ribosomal subunit protein bL17, found in Xanthomonas oryzae pv. oryzae (strain KACC10331 / KXO85).